Reading from the N-terminus, the 762-residue chain is uncharacterized protein (762 aa).

Residues 1–26 are disordered; sequence MENLKSASPEEDSPRHGDNMGKPKRI. The segment covering 12–21 has biased composition (basic and acidic residues); sequence DSPRHGDNMG. Positions 30–57 form a DNA-binding region, zn(2)-C6 fungal-type; it reads CDMCRKRKIRCDGKQPACSNCVSHGIPC. The interval 647–668 is disordered; sequence QSHVPPRISSNHSDTSVKSNSP.

Its subcellular location is the nucleus. This is an uncharacterized protein from Schizosaccharomyces pombe (strain 972 / ATCC 24843) (Fission yeast).